The primary structure comprises 376 residues: Actin-related protein T1 (376 aa).

Belongs to the actin family. In skin, expressed in the basal, spinous and granular layers of the epidermis. Also expressed in hair follicles, sebaceaous glands, eccrine sweat glands and semen.

The protein resides in the cytoplasm. Its subcellular location is the cytoskeleton. It localises to the nucleus. It is found in the cytoplasmic vesicle. The protein localises to the secretory vesicle. The protein resides in the acrosome. In terms of biological role, negatively regulates the Hedgehog (SHH) signaling. Binds to the promoter of the SHH signaling mediator, GLI1, and inhibits its expression. The protein is Actin-related protein T1 of Homo sapiens (Human).